Reading from the N-terminus, the 179-residue chain is Inosine/xanthosine triphosphatase (179 aa).

Substrate is bound by residues 8-13 (TTNPAK) and 68-69 (EA). Glutamate 68 is a Mg(2+) binding site.

This sequence belongs to the YjjX NTPase family. Homodimer. The cofactor is Mg(2+). Mn(2+) is required as a cofactor.

The enzyme catalyses XTP + H2O = XDP + phosphate + H(+). It carries out the reaction ITP + H2O = IDP + phosphate + H(+). Functionally, phosphatase that hydrolyzes non-canonical purine nucleotides such as XTP and ITP to their respective diphosphate derivatives. Probably excludes non-canonical purines from DNA/RNA precursor pool, thus preventing their incorporation into DNA/RNA and avoiding chromosomal lesions. In Serratia proteamaculans (strain 568), this protein is Inosine/xanthosine triphosphatase.